We begin with the raw amino-acid sequence, 481 residues long: Beta-amyrin 28-monooxygenase (481 aa).

Residues Phe-4–Phe-24 form a helical membrane-spanning segment. Cys-428 contributes to the heme binding site.

It belongs to the cytochrome P450 family. Heme serves as cofactor.

It localises to the membrane. It catalyses the reaction beta-amyrin + 3 reduced [NADPH--hemoprotein reductase] + 3 O2 = oleanolate + 3 oxidized [NADPH--hemoprotein reductase] + 4 H2O + 4 H(+). Its function is as follows. Catalyzes the oxidation of the methyl group to a carboxyl group at the C-28 position of beta-amyrin to form oleanolate. This Kalopanax septemlobus (Castor aralia) protein is Beta-amyrin 28-monooxygenase.